The chain runs to 155 residues: 3-hydroxyacyl-[acyl-carrier-protein] dehydratase FabZ (155 aa).

Residue histidine 54 is part of the active site.

This sequence belongs to the thioester dehydratase family. FabZ subfamily.

The protein localises to the cytoplasm. The enzyme catalyses a (3R)-hydroxyacyl-[ACP] = a (2E)-enoyl-[ACP] + H2O. Involved in unsaturated fatty acids biosynthesis. Catalyzes the dehydration of short chain beta-hydroxyacyl-ACPs and long chain saturated and unsaturated beta-hydroxyacyl-ACPs. The polypeptide is 3-hydroxyacyl-[acyl-carrier-protein] dehydratase FabZ (Burkholderia mallei (strain NCTC 10247)).